A 473-amino-acid polypeptide reads, in one-letter code: N-lysine methyltransferase SETD6 (473 aa).

An N6-methylated lysine; by autocatalysis modification is found at K39. The 227-residue stretch at 60-286 (PPAQVAVSRQ…KGHEIFNTYG (227 aa)) folds into the SET domain. 73–75 (AGY) is an S-adenosyl-L-methionine binding site. Position 122 (W122) interacts with substrate. Residue K179 is modified to N6-methylated lysine; by autocatalysis. Y223 is an S-adenosyl-L-methionine binding site. Residues S224 and Q226 each coordinate substrate. Residue 251 to 252 (NH) coordinates S-adenosyl-L-methionine. 2 residues coordinate substrate: Y262 and Y297. Y297 serves as a coordination point for S-adenosyl-L-methionine. At K372 the chain carries N6-methylated lysine; by autocatalysis.

The protein belongs to the class V-like SAM-binding methyltransferase superfamily. Histone-lysine methyltransferase family. SETD6 subfamily. In terms of assembly, monomer, homodimer and homotrimer; these structures are stabilized in the presence of S-adenosyl-L-methionine (SAM). Post-translationally, automethylated; Lys-39 and Lys-179 serve as the major automethylation sites.

It is found in the nucleus. The catalysed reaction is L-lysyl-[protein] + S-adenosyl-L-methionine = N(6)-methyl-L-lysyl-[protein] + S-adenosyl-L-homocysteine + H(+). It carries out the reaction L-lysyl(8)-[histone H2AZ] + S-adenosyl-L-methionine = N(6)-methyl-L-lysyl(8)-[histone H2AZ] + S-adenosyl-L-homocysteine + H(+). With respect to regulation, activated by automethylation. In terms of biological role, protein-lysine N-methyltransferase. Monomethylates 'Lys-310' of the RELA subunit of NF-kappa-B complex, leading to down-regulation of NF-kappa-B transcription factor activity. Monomethylates 'Lys-8' of H2AZ (H2AZK8me1). Required for the maintenance of embryonic stem cell self-renewal. Methylates PAK4. This Homo sapiens (Human) protein is N-lysine methyltransferase SETD6.